Consider the following 223-residue polypeptide: Large ribosomal subunit protein bL25 (223 aa).

Belongs to the bacterial ribosomal protein bL25 family. CTC subfamily. Part of the 50S ribosomal subunit; part of the 5S rRNA/L5/L18/L25 subcomplex. Contacts the 5S rRNA. Binds to the 5S rRNA independently of L5 and L18.

Its function is as follows. This is one of the proteins that binds to the 5S RNA in the ribosome where it forms part of the central protuberance. This Albidiferax ferrireducens (strain ATCC BAA-621 / DSM 15236 / T118) (Rhodoferax ferrireducens) protein is Large ribosomal subunit protein bL25.